Here is a 90-residue protein sequence, read N- to C-terminus: MVKNLFISVISQEETKENRGSVEFQIFNFTNKIQRLTSHLKLHKKDYLSQKGLRKILGKRQRLLAYLSKKNKVRYKELIEKLDIRETKTH.

Belongs to the universal ribosomal protein uS15 family. In terms of assembly, part of the 30S ribosomal subunit.

It is found in the plastid. Its subcellular location is the chloroplast. The sequence is that of Small ribosomal subunit protein uS15c (rps15-A) from Ipomoea purpurea (Common morning glory).